A 271-amino-acid polypeptide reads, in one-letter code: Elongation factor Ts (271 aa).

The interval 76–79 (TDFV) is involved in Mg(2+) ion dislocation from EF-Tu.

The protein belongs to the EF-Ts family.

Its subcellular location is the cytoplasm. Its function is as follows. Associates with the EF-Tu.GDP complex and induces the exchange of GDP to GTP. It remains bound to the aminoacyl-tRNA.EF-Tu.GTP complex up to the GTP hydrolysis stage on the ribosome. The polypeptide is Elongation factor Ts (Mycobacterium bovis (strain BCG / Pasteur 1173P2)).